The sequence spans 217 residues: MALKLDVKAPGGKVEGSIELPAELFDAPANIALMHQVVTAQRAAARQGTHSTKTRGDVSGGGRKPYRQKGTGRARQGSTRAPQFTGGGVVHGPKPRDYSQRTPKKMIAAALRGALSDRARNGRIHAITELVSGQTPSTKSAKAFLGTLTERKQVLVVIGRSDEAGAKSVRNLPGVHILAPDQLNTYDVLRADDVVFSVEALRAYIAANTGTPEEVSA.

A disordered region spans residues 42 to 100; the sequence is RAAARQGTHSTKTRGDVSGGGRKPYRQKGTGRARQGSTRAPQFTGGGVVHGPKPRDYSQ.

Belongs to the universal ribosomal protein uL4 family. In terms of assembly, part of the 50S ribosomal subunit.

Functionally, one of the primary rRNA binding proteins, this protein initially binds near the 5'-end of the 23S rRNA. It is important during the early stages of 50S assembly. It makes multiple contacts with different domains of the 23S rRNA in the assembled 50S subunit and ribosome. In terms of biological role, forms part of the polypeptide exit tunnel. The protein is Large ribosomal subunit protein uL4 of Mycobacterium avium (strain 104).